Consider the following 344-residue polypeptide: S-adenosylmethionine:tRNA ribosyltransferase-isomerase (344 aa).

It belongs to the QueA family. As to quaternary structure, monomer.

Its subcellular location is the cytoplasm. The catalysed reaction is 7-aminomethyl-7-carbaguanosine(34) in tRNA + S-adenosyl-L-methionine = epoxyqueuosine(34) in tRNA + adenine + L-methionine + 2 H(+). It functions in the pathway tRNA modification; tRNA-queuosine biosynthesis. Functionally, transfers and isomerizes the ribose moiety from AdoMet to the 7-aminomethyl group of 7-deazaguanine (preQ1-tRNA) to give epoxyqueuosine (oQ-tRNA). The sequence is that of S-adenosylmethionine:tRNA ribosyltransferase-isomerase from Lactiplantibacillus plantarum (strain ATCC BAA-793 / NCIMB 8826 / WCFS1) (Lactobacillus plantarum).